We begin with the raw amino-acid sequence, 256 residues long: 1-(5-phosphoribosyl)-5-[(5-phosphoribosylamino)methylideneamino] imidazole-4-carboxamide isomerase (256 aa).

The active-site Proton acceptor is the aspartate 8. The active-site Proton donor is aspartate 130.

It belongs to the HisA/HisF family.

It is found in the cytoplasm. The enzyme catalyses 1-(5-phospho-beta-D-ribosyl)-5-[(5-phospho-beta-D-ribosylamino)methylideneamino]imidazole-4-carboxamide = 5-[(5-phospho-1-deoxy-D-ribulos-1-ylimino)methylamino]-1-(5-phospho-beta-D-ribosyl)imidazole-4-carboxamide. It functions in the pathway amino-acid biosynthesis; L-histidine biosynthesis; L-histidine from 5-phospho-alpha-D-ribose 1-diphosphate: step 4/9. The protein is 1-(5-phosphoribosyl)-5-[(5-phosphoribosylamino)methylideneamino] imidazole-4-carboxamide isomerase of Chlorobium phaeovibrioides (strain DSM 265 / 1930) (Prosthecochloris vibrioformis (strain DSM 265)).